The chain runs to 1219 residues: Regulator of telomere elongation helicase 1 (1219 aa).

The 290-residue stretch at N7–H296 folds into the Helicase ATP-binding domain. S42 to T49 serves as a coordination point for ATP. 4 residues coordinate [4Fe-4S] cluster: C145, C163, C172, and C207. The Nuclear localization signal motif lies at K151–V167. The DEAH box motif lies at D250–H253. 7 disordered regions span residues T287–P306, P757–T786, E839–K877, R979–K1005, D1017–K1054, C1132–E1151, and L1159–L1219. Residues P757–P766 show a composition bias toward low complexity. The span at S863–G873 shows a compositional bias: basic and acidic residues. The short motif at P871–K877 is the Nuclear localization signal element. Polar residues predominate over residues K1176–L1185. The PIP-box signature appears at Q1178 to L1185. The segment covering A1200 to L1219 has biased composition (low complexity).

The protein belongs to the helicase family. RAD3/XPD subfamily. As to quaternary structure, interacts with TERF1. Interacts (via PIP-box) with PCNA; the interaction is direct and essential for suppressing telomere fragility. Interacts with MMS19; the interaction mediates the association of RTEL1 with the cytosolic iron-sulfur protein assembly (CIA) complex.

Its subcellular location is the nucleus. The enzyme catalyses ATP + H2O = ADP + phosphate + H(+). Functionally, a probable ATP-dependent DNA helicase implicated in telomere-length regulation, DNA repair and the maintenance of genomic stability. Acts as an anti-recombinase to counteract toxic recombination and limit crossover during meiosis. Regulates meiotic recombination and crossover homeostasis by physically dissociating strand invasion events and thereby promotes noncrossover repair by meiotic synthesis dependent strand annealing (SDSA) as well as disassembly of D loop recombination intermediates. Also disassembles T loops and prevents telomere fragility by counteracting telomeric G4-DNA structures, which together ensure the dynamics and stability of the telomere. This chain is Regulator of telomere elongation helicase 1, found in Homo sapiens (Human).